The primary structure comprises 211 residues: Beta-crystallin B3 (211 aa).

Position 1 is an N-acetylmethionine (Met-1). Position 2 is an N-acetylalanine; in Beta-crystallin B3, N-terminally processed (Ala-2). Residues Ala-2–Ser-23 form an N-terminal arm region. Beta/gamma crystallin 'Greek key' domains follow at residues Tyr-24–Ser-63 and Gly-64–His-108. Positions Ile-109 to Asp-113 are connecting peptide. Beta/gamma crystallin 'Greek key' domains are found at residues His-114–Asn-155 and Gly-156–Arg-198. Residues Gln-200 to Ser-211 are C-terminal arm.

Belongs to the beta/gamma-crystallin family. As to quaternary structure, homo/heterodimer, or complexes of higher-order. The structure of beta-crystallin oligomers seems to be stabilized through interactions between the N-terminal arms.

Crystallins are the dominant structural components of the vertebrate eye lens. In Mus musculus (Mouse), this protein is Beta-crystallin B3 (Crybb3).